The chain runs to 315 residues: Ornithine carbamoyltransferase (315 aa).

Carbamoyl phosphate is bound by residues 53-56 (STRT), Gln-80, Arg-104, and 131-134 (HPCQ). Residues Asn-163, Asp-227, and 231–232 (SM) contribute to the L-ornithine site. Carbamoyl phosphate is bound by residues 267–268 (CL) and Arg-295.

The protein belongs to the aspartate/ornithine carbamoyltransferase superfamily. OTCase family.

It localises to the cytoplasm. The catalysed reaction is carbamoyl phosphate + L-ornithine = L-citrulline + phosphate + H(+). The protein operates within amino-acid biosynthesis; L-arginine biosynthesis; L-arginine from L-ornithine and carbamoyl phosphate: step 1/3. In terms of biological role, reversibly catalyzes the transfer of the carbamoyl group from carbamoyl phosphate (CP) to the N(epsilon) atom of ornithine (ORN) to produce L-citrulline. The protein is Ornithine carbamoyltransferase of Rhodococcus jostii (strain RHA1).